The sequence spans 337 residues: Heme A synthase (337 aa).

The next 5 membrane-spanning stretches (helical) occupy residues 6 to 26, 93 to 113, 118 to 138, 154 to 174, and 192 to 212; these read ITKWLFISCIMVIAMIVIGGI, GRITALIYIVPLIYFYFKDVI, ILPYIIALLLFCVQGFMGWYM, LAFHLIIAVIIYHILFYQLIK, and LIFSGIAITVIYVQIFLGAMV. H256 is a heme binding site. The next 3 membrane-spanning stretches (helical) occupy residues 258 to 278, 285 to 305, and 308 to 328; these read LGGYSVFLVVVVLVICLLKIE, IAYFLMIALLMQISTGIITLL, and VPIIIASIHQLFAIILLSIII. Residue H316 coordinates heme.

The protein belongs to the COX15/CtaA family. Type 2 subfamily. Interacts with CtaB. Requires heme b as cofactor.

The protein resides in the cell membrane. It catalyses the reaction Fe(II)-heme o + 2 A + H2O = Fe(II)-heme a + 2 AH2. It participates in porphyrin-containing compound metabolism; heme A biosynthesis; heme A from heme O: step 1/1. Catalyzes the conversion of heme O to heme A by two successive hydroxylations of the methyl group at C8. The first hydroxylation forms heme I, the second hydroxylation results in an unstable dihydroxymethyl group, which spontaneously dehydrates, resulting in the formyl group of heme A. In Rickettsia felis (strain ATCC VR-1525 / URRWXCal2) (Rickettsia azadi), this protein is Heme A synthase.